The following is a 195-amino-acid chain: Cell division protein SepF (195 aa).

Residues 32 to 54 (RYSKTNSSETLAPEEEEPIRNRR) form a disordered region.

Belongs to the SepF family. As to quaternary structure, homodimer. Interacts with FtsZ.

The protein localises to the cytoplasm. Cell division protein that is part of the divisome complex and is recruited early to the Z-ring. Probably stimulates Z-ring formation, perhaps through the cross-linking of FtsZ protofilaments. Its function overlaps with FtsA. In Gloeothece citriformis (strain PCC 7424) (Cyanothece sp. (strain PCC 7424)), this protein is Cell division protein SepF.